A 357-amino-acid polypeptide reads, in one-letter code: Neurogenic differentiation factor 1 (357 aa).

The tract at residues 1-94 is disordered; that stretch reads MTKSYSESGL…GPKKKKMTKA (94 aa). A compositionally biased stretch (acidic residues) spans 58–78; sequence EEEEEDEDLEEEEEEEEEEED. Positions 81–93 are enriched in basic residues; the sequence is PKRRGPKKKKMTK. The short motif at 87–93 is the Nuclear localization signal element; the sequence is KKKKMTK. Residues 101–153 enclose the bHLH domain; that stretch reads LRRMKANARERNRMHGLNAALDNLRKVVPCYSKTQKLSKIETLRLAKNYIWAL. Ser-162, Ser-259, Ser-266, and Ser-274 each carry phosphoserine. Position 336 is a phosphoserine; by CaMK2 (Ser-336).

Efficient DNA-binding requires dimerization with another bHLH protein. Heterodimer with TCF3/E47; the heterodimer is inhibited in presence of ID2, but not NR0B2, to E-box element. Interacts with EP300; the interaction is inhibited by NR0B2. Interacts with RREB1. Interacts with ATOH8. Post-translationally, in islet cells, phosphorylated on Ser-274 upon glucose stimulation; which may be required for nuclear localization. In activated neurons, phosphorylated on Ser-336; which promotes dendritic growth. Phosphorylated by MAPK1; phosphorylation regulates heterodimerization and DNA-binding activities. Phosphorylation on Ser-266 and Ser-274 increases transactivation on the insulin promoter in glucose-stimulated insulinoma cells. In terms of tissue distribution, expressed in pancreatic beta cells, pulmonary neuroendocrine cells and retinal interneurons amacrine cells (at protein level). Expressed in endocrine cells of the pancreas. Expressed in the inner layer of cerebellar external granular layer (EGL). Expressed in the Ammon's horn (AH), which includes the CA1-CA3 pyramidal layer and in granule cells of the dentate gyrus (DG). Expressed in photoreceptors of the outer nuclear layer (ONL), in a subset of cells in the lower half of the inner nuclear layer (INL), and in a subset of cells in the ganglion cell layer (GCL) of the retina. Expressed in cholinergic and AII amacrine cell types. Expressed in differentiating neurons of both the central and peripheral nervous systems.

The protein resides in the cytoplasm. Its subcellular location is the nucleus. Acts as a transcriptional activator: mediates transcriptional activation by binding to E box-containing promoter consensus core sequences 5'-CANNTG-3'. Associates with the p300/CBP transcription coactivator complex to stimulate transcription of the secretin gene as well as the gene encoding the cyclin-dependent kinase inhibitor CDKN1A. Contributes to the regulation of several cell differentiation pathways, like those that promote the formation of early retinal ganglion cells, inner ear sensory neurons, granule cells forming either the cerebellum or the dentate gyrus cell layer of the hippocampus, endocrine islet cells of the pancreas and enteroendocrine cells of the small intestine. Together with PAX6 or SIX3, is required for the regulation of amacrine cell fate specification. Also required for dendrite morphogenesis and maintenance in the cerebellar cortex. Associates with chromatin to enhancer regulatory elements in genes encoding key transcriptional regulators of neurogenesis. This Mus musculus (Mouse) protein is Neurogenic differentiation factor 1 (Neurod1).